Here is a 130-residue protein sequence, read N- to C-terminus: Early E3B 14.5 kDa protein (130 aa).

A signal peptide spans 1–19 (MKRIVTFVLLIFCALPVLC). Residues 53–77 (AWLYAIISVMVFCSTIFALAIYPYL) form a helical membrane-spanning segment.

It belongs to the adenoviridae E3_14 family. In terms of processing, phosphorylated on serine; O-glycosylated, but not N-glycosylated.

The protein localises to the host membrane. Functionally, down-regulates the EGF receptor and prevents cytolysis by TNF. The chain is Early E3B 14.5 kDa protein from Human adenovirus C serotype 6 (HAdV-6).